We begin with the raw amino-acid sequence, 61 residues long: Protein A40 homolog (61 aa).

The Cytoplasmic segment spans residues methionine 1 to alanine 11. Residues glycine 12–leucine 32 form a helical; Signal-anchor for type II membrane protein membrane-spanning segment. The Extracellular portion of the chain corresponds to lysine 33–aspartate 61.

This sequence belongs to the poxviridae A40 protein family.

Its subcellular location is the host membrane. This Homo sapiens (Human) protein is Protein A40 homolog (A45R).